Here is a 62-residue protein sequence, read N- to C-terminus: UPF0434 protein RHECIAT_CH0004260 (62 aa).

This sequence belongs to the UPF0434 family.

This chain is UPF0434 protein RHECIAT_CH0004260, found in Rhizobium etli (strain CIAT 652).